Reading from the N-terminus, the 576-residue chain is MNIQAFLSEKISMAMSAAGAPADSEPLVRQSAKVQFGDYQANGVMGAAKKMGIPPRQLAEKILEHLDITDIADKVEIAGPGFINIFLSPVWVAQQAEFALADEHLNITKVTPETIVIDYSSPNVAKQMHVGHLRSTIIGDASARTLSFLGHNVIRANHLGDWGTQFGMLIAYLEKKQNENAADMALADLEEFYREAKKCYDEDEVFAERARNYVVRLQGGDEYCRTMWRKLVDITMQQNQLTYQRLNVTLTEDDIMGESLYNPMLPGIVADLKAKGLAVESEGATVVFLDEYKNKEGEPMGVIIQKKDGGYLYTTTDIACAKYRHEQLHANRVLYYIDSRQHQHLMQAWTIVRKAGYIPDSMSLEHHMFGMMLGKDGRPFKTRSGGTVRLTDLLDEAHERALTLIREKNPDMDEEELNNIARVVGIGAVKYADLSKNRTTDYIFDWDLMLSFEGNTAPYMQYAYTRVASIFKRADIDESALTQPISLTQPHEKQLALRLVQFDETITQVAREGTPHVMCAYLYDLAQSFSGFYENCPILSAEDDNVRQSRLKLARLTARTLKQGLETLGIETVDRM.

Positions 122–132 match the 'HIGH' region motif; that stretch reads PNVAKQMHVGH.

This sequence belongs to the class-I aminoacyl-tRNA synthetase family. In terms of assembly, monomer.

Its subcellular location is the cytoplasm. The enzyme catalyses tRNA(Arg) + L-arginine + ATP = L-arginyl-tRNA(Arg) + AMP + diphosphate. The polypeptide is Arginine--tRNA ligase (Proteus mirabilis (strain HI4320)).